Consider the following 216-residue polypeptide: Ras-related protein Rab-5C (216 aa).

Serine 30, alanine 31, glycine 33, lysine 34, serine 35, serine 36, histidine 47, glutamate 48, threonine 53, glycine 79, asparagine 134, lysine 135, aspartate 137, alanine 165, and lysine 166 together coordinate GTP. Serine 35 lines the Mg(2+) pocket. 2 short sequence motifs (switch) span residues glutamine 45–alanine 57 and alanine 78–alanine 94. Threonine 53 contacts Mg(2+). Residues lysine 184–asparagine 216 are disordered. The segment covering glutamine 203–asparagine 216 has biased composition (polar residues). S-geranylgeranyl cysteine attachment occurs at residues cysteine 213 and cysteine 214.

This sequence belongs to the small GTPase superfamily. Rab family. The cofactor is Mg(2+). In terms of tissue distribution, detected in brain, ovary, rectum, small intestine, large intestine, liver, spleen, follicle and kidney (at protein level).

It is found in the cell membrane. It localises to the early endosome membrane. It carries out the reaction GTP + H2O = GDP + phosphate + H(+). Regulated by guanine nucleotide exchange factors (GEFs) which promote the exchange of bound GDP for free GTP. Regulated by GTPase activating proteins (GAPs) which increase the GTP hydrolysis activity. Inhibited by GDP dissociation inhibitors (GDIs). The small GTPases Rab are key regulators of intracellular membrane trafficking, from the formation of transport vesicles to their fusion with membranes. Rabs cycle between an inactive GDP-bound form and an active GTP-bound form that is able to recruit to membranes different sets of downstream effectors directly responsible for vesicle formation, movement, tethering and fusion. The sequence is that of Ras-related protein Rab-5C (RAB5C) from Gallus gallus (Chicken).